We begin with the raw amino-acid sequence, 458 residues long: Serine/threonine-protein kinase tricornered (458 aa).

The 298-residue stretch at 92-389 (FEALKVIGRG…LEDLKSVPFF (298 aa)) folds into the Protein kinase domain. ATP is bound by residues 98-106 (IGRGAFGEV) and Lys121. Residues 118–179 (YAMKVLRKAD…EFLPGGDMMT (62 aa)) are interaction with mats and Mob1. The active-site Proton acceptor is Asp215. Position 287 is a phosphoserine (Ser287). In terms of domain architecture, AGC-kinase C-terminal spans 390-458 (RGVDWEHIRE…YKRFEVRNLE (69 aa)). At Thr448 the chain carries Phosphothreonine.

It belongs to the protein kinase superfamily. AGC Ser/Thr protein kinase family. Interacts with, and is activated by, Mob1. Mg(2+) serves as cofactor.

It is found in the cytoplasm. The protein resides in the nucleus. The catalysed reaction is L-seryl-[protein] + ATP = O-phospho-L-seryl-[protein] + ADP + H(+). It carries out the reaction L-threonyl-[protein] + ATP = O-phospho-L-threonyl-[protein] + ADP + H(+). In terms of biological role, serine/threonine-protein kinase involved in controlling cell structure and proliferation of a variety of polarized outgrowths including epidermal hairs, bristles, arista laterals, and dendrites. Together with fry, maintains the integrity of epidermal hairs and is an essential component of the signaling pathway regulating dendritic branching of sensory neurons. Reduces neurite outgrowth by phosphorylating pav/pavarotti, thereby inhibiting its function in microtubule-microtubule sliding. The sequence is that of Serine/threonine-protein kinase tricornered from Drosophila pseudoobscura pseudoobscura (Fruit fly).